The chain runs to 473 residues: 3-isopropylmalate dehydratase large subunit (473 aa).

[4Fe-4S] cluster is bound by residues C354, C414, and C417. Residues 425-448 form a disordered region; that stretch reads LAPGQRSASTSNRNFEGRQGRGGR.

It belongs to the aconitase/IPM isomerase family. LeuC type 1 subfamily. As to quaternary structure, heterodimer of LeuC and LeuD. The cofactor is [4Fe-4S] cluster.

The catalysed reaction is (2R,3S)-3-isopropylmalate = (2S)-2-isopropylmalate. Its pathway is amino-acid biosynthesis; L-leucine biosynthesis; L-leucine from 3-methyl-2-oxobutanoate: step 2/4. Its function is as follows. Catalyzes the isomerization between 2-isopropylmalate and 3-isopropylmalate, via the formation of 2-isopropylmaleate. The sequence is that of 3-isopropylmalate dehydratase large subunit from Acidothermus cellulolyticus (strain ATCC 43068 / DSM 8971 / 11B).